The chain runs to 497 residues: Signal recognition particle subunit SRP54 2 (497 aa).

The segment at 1 to 297 (MVLAELGGRI…DAKPFVSRLL (297 aa)) is G-domain. Residues 108–117 (GLQGEVLEKP), 192–196 (DTSGR), and 250–253 (TKMD) each bind GTP. The tract at residues 298 to 497 (GNGDMSGFVN…LMGMFGGRDE (200 aa)) is M-domain.

Belongs to the GTP-binding SRP family. SRP54 subfamily. Component of a signal recognition particle (SRP) complex that consists of a 7SL RNA molecule of 300 nucleotides and six protein subunits: SRP72, SRP68, SRP54, SRP19, SRP14 and SRP9.

Its subcellular location is the cytoplasm. It localises to the endoplasmic reticulum. It catalyses the reaction GTP + H2O = GDP + phosphate + H(+). Component of the signal recognition particle (SRP) complex, a ribonucleoprotein complex that mediates the cotranslational targeting of secretory and membrane proteins to the endoplasmic reticulum (ER). As part of the SRP complex, associates with the SRP receptor (SR) component SRPRA to target secretory proteins to the endoplasmic reticulum membrane. Binds to the signal sequence of presecretory proteins when they emerge from the ribosomes. Displays basal GTPase activity, and stimulates reciprocal GTPase activation of the SR subunit SRPRA. Forms a guanosine 5'-triphosphate (GTP)-dependent complex with the SR subunit SRPRA. SR compaction and GTPase mediated rearrangement of SR drive SRP-mediated cotranslational protein translocation into the ER. Requires the presence of SRP9/SRP14 and/or SRP19 to stably interact with RNA. The polypeptide is Signal recognition particle subunit SRP54 2 (SRP-54B) (Arabidopsis thaliana (Mouse-ear cress)).